We begin with the raw amino-acid sequence, 664 residues long: MPFRIEAPYQPTGDQPQAIEKLVAGLRAGYRHQTLLGATGTGKTFVMAHIFAQIQRPTLVLAHNKTLVSQLWAEFREFLPDAAVEMFISYYDEYTPEAYVPSKDLYIEKEASINEEIDRLRHAATQALLTRRDVLIVASVSAIFGLGSPHDYGQEKIHLRTGEVRNRDKLLRQLIDLQFERNDVDFQRGTFRVRGDTLDIIPANAETAIRVEFWGDEIERIVELDPLTGEVLLKHTAVEIYPAKHFVTTKEKLQLAIVSIQAELNERLQELEAAGKLLEAQRLKQRTLYDLEMLSEVGYCSGIENYSRHLDGRAPGQTPWTLLDYFPDDFLMFIDESHITIPQLRGMYNGDRQRKQTLVDYGFRLPSALDNRPLKFEEFEQHVYQVIYVSATPGPYEREKSEQIVEQIIRPTGLLDPEIEVRPTRGQIDDLLGEIRRRVERKQRVLVTTLTKRMAEDLADYLKEMGVRTMYLHADIDTIERVEILRDLRLGVYDVVVGINLLREGLDLPEVSLVAILDADKEGYLRSETSLIQIIGRAARHIEGKVIMYADTITRSMEVAIRETQRRREIQMAHNVRHGITPQGIAKGVRDLTDRIRKVAEERGEYVTTPETAVPVDLPRDEVLKLIKDLEKQMKQAAKALAFEKAAALRDQIVELRQALALSE.

In terms of domain architecture, Helicase ATP-binding spans 24-182 (AGLRAGYRHQ…QLIDLQFERN (159 aa)). ATP is bound at residue 37-44 (GATGTGKT). A Beta-hairpin motif is present at residues 90–113 (YYDEYTPEAYVPSKDLYIEKEASI). In terms of domain architecture, Helicase C-terminal spans 427 to 593 (QIDDLLGEIR…GIAKGVRDLT (167 aa)). Positions 624-659 (LKLIKDLEKQMKQAAKALAFEKAAALRDQIVELRQA) constitute a UVR domain.

This sequence belongs to the UvrB family. As to quaternary structure, forms a heterotetramer with UvrA during the search for lesions. Interacts with UvrC in an incision complex.

The protein resides in the cytoplasm. In terms of biological role, the UvrABC repair system catalyzes the recognition and processing of DNA lesions. A damage recognition complex composed of 2 UvrA and 2 UvrB subunits scans DNA for abnormalities. Upon binding of the UvrA(2)B(2) complex to a putative damaged site, the DNA wraps around one UvrB monomer. DNA wrap is dependent on ATP binding by UvrB and probably causes local melting of the DNA helix, facilitating insertion of UvrB beta-hairpin between the DNA strands. Then UvrB probes one DNA strand for the presence of a lesion. If a lesion is found the UvrA subunits dissociate and the UvrB-DNA preincision complex is formed. This complex is subsequently bound by UvrC and the second UvrB is released. If no lesion is found, the DNA wraps around the other UvrB subunit that will check the other stand for damage. The protein is UvrABC system protein B of Chloroflexus aggregans (strain MD-66 / DSM 9485).